The following is a 1141-amino-acid chain: DNA-directed RNA polymerase subunit beta (1141 aa).

2 stretches are compositionally biased toward acidic residues: residues 1063–1074 (EIEIKEDDDDVS) and 1096–1141 (GGNE…GDEE). Positions 1063–1141 (EIEIKEDDDD…VPDEAYGDEE (79 aa)) are disordered.

The protein belongs to the RNA polymerase beta chain family. The RNAP catalytic core consists of 2 alpha, 1 beta, 1 beta' and 1 omega subunit. When a sigma factor is associated with the core the holoenzyme is formed, which can initiate transcription.

It carries out the reaction RNA(n) + a ribonucleoside 5'-triphosphate = RNA(n+1) + diphosphate. In terms of biological role, DNA-dependent RNA polymerase catalyzes the transcription of DNA into RNA using the four ribonucleoside triphosphates as substrates. The sequence is that of DNA-directed RNA polymerase subunit beta from Moorella thermoacetica (strain ATCC 39073 / JCM 9320).